The sequence spans 207 residues: Ribonuclease HII (207 aa).

The RNase H type-2 domain occupies 12–201 (DLVAGVDEVG…VRAAWEAREG (190 aa)). The a divalent metal cation site is built by Asp-18, Glu-19, and Asp-110.

This sequence belongs to the RNase HII family. The cofactor is Mn(2+). Requires Mg(2+) as cofactor.

The protein localises to the cytoplasm. The enzyme catalyses Endonucleolytic cleavage to 5'-phosphomonoester.. In terms of biological role, endonuclease that specifically degrades the RNA of RNA-DNA hybrids. This Pseudomonas putida (strain GB-1) protein is Ribonuclease HII.